A 329-amino-acid polypeptide reads, in one-letter code: GTPase Obg (329 aa).

The Obg domain maps to 1–159; that stretch reads MQFIDQARIS…WPLQLELKLL (159 aa). The OBG-type G domain occupies 160 to 328; that stretch reads AEVGIIGLPN…MLDRVWSELG (169 aa). ATP is bound by residues 166–173, 191–195, 213–216, 280–283, and 309–311; these read GLPNAGKS, FTTLI, DIPG, NKQE, and SAA. Positions 173 and 193 each coordinate Mg(2+).

The protein belongs to the TRAFAC class OBG-HflX-like GTPase superfamily. OBG GTPase family. Monomer. Mg(2+) serves as cofactor.

Its subcellular location is the cytoplasm. Functionally, an essential GTPase which binds GTP, GDP and possibly (p)ppGpp with moderate affinity, with high nucleotide exchange rates and a fairly low GTP hydrolysis rate. Plays a role in control of the cell cycle, stress response, ribosome biogenesis and in those bacteria that undergo differentiation, in morphogenesis control. The polypeptide is GTPase Obg (Synechococcus sp. (strain CC9311)).